Here is a 70-residue protein sequence, read N- to C-terminus: Phycobilisome 8.1 kDa linker polypeptide, phycocyanin-associated, rod (70 aa).

The CpcD-like domain maps to 5-63; it reads SRSFQVEVSGLHQNEVTNQNNYPIRSSGSVFITIPFSRFNEELQRINRLGGKIVNIQPL.

This sequence belongs to the phycobilisome linker protein family.

The protein localises to the cellular thylakoid membrane. In terms of biological role, rod linker protein, associated with phycocyanin. Linker polypeptides determine the state of aggregation and the location of the disk-shaped phycobiliprotein units within the phycobilisome and modulate their spectroscopic properties in order to mediate a directed and optimal energy transfer. The sequence is that of Phycobilisome 8.1 kDa linker polypeptide, phycocyanin-associated, rod (cpcD3) from Microchaete diplosiphon (Fremyella diplosiphon).